A 166-amino-acid chain; its full sequence is NAD(P)H-quinone oxidoreductase subunit I, chloroplastic (166 aa).

2 consecutive 4Fe-4S ferredoxin-type domains span residues 55–84 and 95–124; these read GRIH…VDWK and LNYS…MTEE. 8 residues coordinate [4Fe-4S] cluster: Cys-64, Cys-67, Cys-70, Cys-74, Cys-104, Cys-107, Cys-110, and Cys-114.

Belongs to the complex I 23 kDa subunit family. In terms of assembly, NDH is composed of at least 16 different subunits, 5 of which are encoded in the nucleus. The cofactor is [4Fe-4S] cluster.

The protein localises to the plastid. It is found in the chloroplast thylakoid membrane. It carries out the reaction a plastoquinone + NADH + (n+1) H(+)(in) = a plastoquinol + NAD(+) + n H(+)(out). The catalysed reaction is a plastoquinone + NADPH + (n+1) H(+)(in) = a plastoquinol + NADP(+) + n H(+)(out). Functionally, NDH shuttles electrons from NAD(P)H:plastoquinone, via FMN and iron-sulfur (Fe-S) centers, to quinones in the photosynthetic chain and possibly in a chloroplast respiratory chain. The immediate electron acceptor for the enzyme in this species is believed to be plastoquinone. Couples the redox reaction to proton translocation, and thus conserves the redox energy in a proton gradient. This chain is NAD(P)H-quinone oxidoreductase subunit I, chloroplastic, found in Silphium perfoliatum (Cup plant).